Reading from the N-terminus, the 127-residue chain is Aspartate 1-decarboxylase (127 aa).

Ser-25 serves as the catalytic Schiff-base intermediate with substrate; via pyruvic acid. Ser-25 is modified (pyruvic acid (Ser)). Thr-57 provides a ligand contact to substrate. Residue Tyr-58 is the Proton donor of the active site. A substrate-binding site is contributed by 73-75 (GAA).

The protein belongs to the PanD family. As to quaternary structure, heterooctamer of four alpha and four beta subunits. The cofactor is pyruvate. Post-translationally, is synthesized initially as an inactive proenzyme, which is activated by self-cleavage at a specific serine bond to produce a beta-subunit with a hydroxyl group at its C-terminus and an alpha-subunit with a pyruvoyl group at its N-terminus.

It localises to the cytoplasm. It carries out the reaction L-aspartate + H(+) = beta-alanine + CO2. It functions in the pathway cofactor biosynthesis; (R)-pantothenate biosynthesis; beta-alanine from L-aspartate: step 1/1. In terms of biological role, catalyzes the pyruvoyl-dependent decarboxylation of aspartate to produce beta-alanine. This is Aspartate 1-decarboxylase from Anoxybacillus flavithermus (strain DSM 21510 / WK1).